We begin with the raw amino-acid sequence, 334 residues long: Ornithine carbamoyltransferase (334 aa).

Residues 57-60, Gln-84, Arg-108, and 135-138 contribute to the carbamoyl phosphate site; these read STRT and HPTQ. L-ornithine-binding positions include Asn-169, Asp-233, and 237–238; that span reads SM. Carbamoyl phosphate-binding positions include 275–276 and Arg-320; that span reads CL.

The protein belongs to the aspartate/ornithine carbamoyltransferase superfamily. OTCase family. In terms of assembly, homotrimer.

The protein resides in the cytoplasm. The catalysed reaction is carbamoyl phosphate + L-ornithine = L-citrulline + phosphate + H(+). It functions in the pathway amino-acid biosynthesis; L-arginine biosynthesis; L-arginine from L-ornithine and carbamoyl phosphate: step 1/3. Functionally, reversibly catalyzes the transfer of the carbamoyl group from carbamoyl phosphate (CP) to the N(epsilon) atom of ornithine (ORN) to produce L-citrulline. This Vibrio vulnificus (strain CMCP6) protein is Ornithine carbamoyltransferase.